A 66-amino-acid chain; its full sequence is Large ribosomal subunit protein bL35 (66 aa).

It belongs to the bacterial ribosomal protein bL35 family.

This Borreliella burgdorferi (strain ATCC 35210 / DSM 4680 / CIP 102532 / B31) (Borrelia burgdorferi) protein is Large ribosomal subunit protein bL35.